We begin with the raw amino-acid sequence, 685 residues long: Methionine--tRNA ligase (685 aa).

The 'HIGH' region motif lies at 12–22; sequence PYANGSIHLGH. Positions 143, 146, 156, and 159 each coordinate Zn(2+). Residues 339 to 343 carry the 'KMSKS' region motif; sequence KMSKS. Position 342 (Lys-342) interacts with ATP. Residues 582–685 form the tRNA-binding domain; it reads DFMKIDMRVA…TGAQPGDKVG (104 aa).

Belongs to the class-I aminoacyl-tRNA synthetase family. MetG type 1 subfamily. Homodimer. Zn(2+) serves as cofactor.

Its subcellular location is the cytoplasm. The catalysed reaction is tRNA(Met) + L-methionine + ATP = L-methionyl-tRNA(Met) + AMP + diphosphate. Functionally, is required not only for elongation of protein synthesis but also for the initiation of all mRNA translation through initiator tRNA(fMet) aminoacylation. The polypeptide is Methionine--tRNA ligase (Neisseria meningitidis serogroup B (strain ATCC BAA-335 / MC58)).